Here is a 59-residue protein sequence, read N- to C-terminus: UPF0434 protein Shew_1640 (59 aa).

It belongs to the UPF0434 family.

This is UPF0434 protein Shew_1640 from Shewanella loihica (strain ATCC BAA-1088 / PV-4).